The sequence spans 263 residues: Hemin import ATP-binding protein HmuV (263 aa).

Residues 2 to 242 (IEARDVSVDI…DLIEKVFDCR (241 aa)) form the ABC transporter domain. An ATP-binding site is contributed by 34–41 (GPNGSGKT).

The protein belongs to the ABC transporter superfamily. Heme (hemin) importer (TC 3.A.1.14.5) family. The complex is composed of two ATP-binding proteins (HmuV), two transmembrane proteins (HmuU) and a solute-binding protein (HmuT).

It localises to the cell inner membrane. Its function is as follows. Part of the ABC transporter complex HmuTUV involved in hemin import. Responsible for energy coupling to the transport system. This Mesorhizobium japonicum (strain LMG 29417 / CECT 9101 / MAFF 303099) (Mesorhizobium loti (strain MAFF 303099)) protein is Hemin import ATP-binding protein HmuV.